The sequence spans 229 residues: Large ribosomal subunit protein uL1 (229 aa).

The protein belongs to the universal ribosomal protein uL1 family. In terms of assembly, part of the 50S ribosomal subunit.

Functionally, binds directly to 23S rRNA. The L1 stalk is quite mobile in the ribosome, and is involved in E site tRNA release. Its function is as follows. Protein L1 is also a translational repressor protein, it controls the translation of the L11 operon by binding to its mRNA. This is Large ribosomal subunit protein uL1 from Listeria innocua serovar 6a (strain ATCC BAA-680 / CLIP 11262).